The following is a 236-amino-acid chain: Leucyl/phenylalanyl-tRNA--protein transferase (236 aa).

It belongs to the L/F-transferase family.

It is found in the cytoplasm. It carries out the reaction N-terminal L-lysyl-[protein] + L-leucyl-tRNA(Leu) = N-terminal L-leucyl-L-lysyl-[protein] + tRNA(Leu) + H(+). The catalysed reaction is N-terminal L-arginyl-[protein] + L-leucyl-tRNA(Leu) = N-terminal L-leucyl-L-arginyl-[protein] + tRNA(Leu) + H(+). It catalyses the reaction L-phenylalanyl-tRNA(Phe) + an N-terminal L-alpha-aminoacyl-[protein] = an N-terminal L-phenylalanyl-L-alpha-aminoacyl-[protein] + tRNA(Phe). In terms of biological role, functions in the N-end rule pathway of protein degradation where it conjugates Leu, Phe and, less efficiently, Met from aminoacyl-tRNAs to the N-termini of proteins containing an N-terminal arginine or lysine. This is Leucyl/phenylalanyl-tRNA--protein transferase from Shewanella halifaxensis (strain HAW-EB4).